The following is a 206-amino-acid chain: Large ribosomal subunit protein uL4 (206 aa).

The tract at residues 63-93 (MYKQKGTGRARHHSARAPQFRGGGKAHGPVV) is disordered. A compositionally biased stretch (basic residues) spans 64–77 (YKQKGTGRARHHSA).

The protein belongs to the universal ribosomal protein uL4 family. Part of the 50S ribosomal subunit.

Functionally, one of the primary rRNA binding proteins, this protein initially binds near the 5'-end of the 23S rRNA. It is important during the early stages of 50S assembly. It makes multiple contacts with different domains of the 23S rRNA in the assembled 50S subunit and ribosome. Its function is as follows. Forms part of the polypeptide exit tunnel. The chain is Large ribosomal subunit protein uL4 from Rhizobium meliloti (strain 1021) (Ensifer meliloti).